We begin with the raw amino-acid sequence, 231 residues long: Large ribosomal subunit protein uL1 (231 aa).

Belongs to the universal ribosomal protein uL1 family. As to quaternary structure, part of the 50S ribosomal subunit.

Functionally, binds directly to 23S rRNA. The L1 stalk is quite mobile in the ribosome, and is involved in E site tRNA release. Protein L1 is also a translational repressor protein, it controls the translation of the L11 operon by binding to its mRNA. The sequence is that of Large ribosomal subunit protein uL1 from Chlorobaculum tepidum (strain ATCC 49652 / DSM 12025 / NBRC 103806 / TLS) (Chlorobium tepidum).